The chain runs to 147 residues: UPF0306 protein YhbP (147 aa).

It belongs to the UPF0306 family.

In Escherichia coli (strain K12 / MC4100 / BW2952), this protein is UPF0306 protein YhbP.